A 1387-amino-acid chain; its full sequence is DNA-directed RNA polymerase subunit beta (1387 aa).

Belongs to the RNA polymerase beta chain family. In terms of assembly, the RNAP catalytic core consists of 2 alpha, 1 beta, 1 beta' and 1 omega subunit. When a sigma factor is associated with the core the holoenzyme is formed, which can initiate transcription.

It catalyses the reaction RNA(n) + a ribonucleoside 5'-triphosphate = RNA(n+1) + diphosphate. In terms of biological role, DNA-dependent RNA polymerase catalyzes the transcription of DNA into RNA using the four ribonucleoside triphosphates as substrates. The polypeptide is DNA-directed RNA polymerase subunit beta (Xanthomonas campestris pv. campestris (strain ATCC 33913 / DSM 3586 / NCPPB 528 / LMG 568 / P 25)).